A 407-amino-acid polypeptide reads, in one-letter code: Tryptophan synthase beta chain (407 aa).

Lys-98 bears the N6-(pyridoxal phosphate)lysine mark.

Belongs to the TrpB family. Tetramer of two alpha and two beta chains. Pyridoxal 5'-phosphate serves as cofactor.

The catalysed reaction is (1S,2R)-1-C-(indol-3-yl)glycerol 3-phosphate + L-serine = D-glyceraldehyde 3-phosphate + L-tryptophan + H2O. Its pathway is amino-acid biosynthesis; L-tryptophan biosynthesis; L-tryptophan from chorismate: step 5/5. Its function is as follows. The beta subunit is responsible for the synthesis of L-tryptophan from indole and L-serine. The chain is Tryptophan synthase beta chain from Bradyrhizobium sp. (strain BTAi1 / ATCC BAA-1182).